The chain runs to 371 residues: UPF0284 protein tll2306 (371 aa).

The protein belongs to the UPF0284 family.

The polypeptide is UPF0284 protein tll2306 (Thermosynechococcus vestitus (strain NIES-2133 / IAM M-273 / BP-1)).